The following is a 223-amino-acid chain: AN1-type zinc finger protein 6 (223 aa).

The A20-type zinc finger occupies 8 to 42 (SQAPMLCSTGCGFYGNPRTNGMCSVCYKEHLQRQN). Zn(2+) is bound by residues cysteine 14, cysteine 18, cysteine 30, and cysteine 33. The interval 41–155 (QNSSNGRISP…PSEEQSKSLE (115 aa)) is disordered. Phosphoserine is present on serine 49. 2 stretches are compositionally biased toward polar residues: residues 77-110 (ALDSTSSSMQPGPVSNQSLLSESVAPSQVDSTSV) and 137-148 (SSVSDTTQQPSE). Residues 158–204 (KQKKNRCFMCRKKVGLTGFECRCGNVYCGVHRYSDVHNCSYNYKADA) form an AN1-type zinc finger. Zn(2+) is bound by residues cysteine 164, cysteine 167, cysteine 178, cysteine 180, cysteine 185, histidine 188, histidine 194, and cysteine 196. An N6-acetyllysine modification is found at lysine 219.

Interacts with PKN1. Interacts with TRAF2. Interacts with mono- and polyubiquitin. Interacts with PEX6. Interacts with PEX5 (Cys-linked ubiquitinated).

It localises to the cytoplasm. Involved in regulation of TNF-alpha induced NF-kappa-B activation and apoptosis. Involved in modulation of 'Lys-48'-linked polyubiquitination status of TRAF2 and decreases association of TRAF2 with RIPK1. Required for PTS1 target sequence-dependent protein import into peroxisomes and PEX5 stability; may cooperate with PEX6. In vitro involved in PEX5 export from the cytosol to peroxisomes. In Mus musculus (Mouse), this protein is AN1-type zinc finger protein 6 (Zfand6).